The following is a 176-amino-acid chain: Oligoribonuclease (176 aa).

The Exonuclease domain occupies 2 to 159; it reads EMTGLNPETD…DDILESIEEM (158 aa). Y117 is a catalytic residue.

Belongs to the oligoribonuclease family.

The protein localises to the cytoplasm. Its function is as follows. 3'-to-5' exoribonuclease specific for small oligoribonucleotides. This chain is Oligoribonuclease, found in Neisseria gonorrhoeae (strain ATCC 700825 / FA 1090).